The following is a 155-amino-acid chain: Small ribosomal subunit protein uS7c (155 aa).

This sequence belongs to the universal ribosomal protein uS7 family. In terms of assembly, part of the 30S ribosomal subunit.

The protein resides in the plastid. Its subcellular location is the chloroplast. Its function is as follows. One of the primary rRNA binding proteins, it binds directly to 16S rRNA where it nucleates assembly of the head domain of the 30S subunit. This chain is Small ribosomal subunit protein uS7c (rps7), found in Coelogyne cristata (Orchid).